Consider the following 744-residue polypeptide: Leukocyte immunoglobulin-like receptor subfamily B member 3A (744 aa).

Residues 1-24 form the signal peptide; the sequence is MTFTFTALLCLGLTLGLWIPVLTG. Topologically, residues 25 to 543 are extracellular; sequence SLPKPILRVQ…PPDGLQRYLK (519 aa). Ig-like C2-type domains lie at 26–119, 121–221, 223–316, 320–419, and 426–520; these read LPKP…VVTG, YSKP…LVSG, LQKP…VVTG, YHPL…LITG, and FLSV…IVSG. Disulfide bonds link cysteine 49-cysteine 98, cysteine 144-cysteine 197, and cysteine 246-cysteine 295. Residue asparagine 79 is glycosylated (N-linked (GlcNAc...) asparagine). A glycan (N-linked (GlcNAc...) asparagine) is linked at asparagine 338. Cysteine 343 and cysteine 395 are disulfide-bonded. Asparagine 440 is a glycosylation site (N-linked (GlcNAc...) asparagine). A disulfide bridge links cysteine 445 with cysteine 496. A helical membrane pass occupies residues 544–564; it reads ALIGVSVAFLLFLFILIFILL. Residues 565–744 lie on the Cytoplasmic side of the membrane; sequence RRRHQEKFRK…PGAVPKNKKQ (180 aa). Positions 572–584 are enriched in basic and acidic residues; that stretch reads FRKDDEDAQKGKE. Disordered regions lie at residues 572–617, 630–652, and 667–744; these read FRKD…ESLY, ELDTWKPPEGDPQGETYAQVEPS, and EQLN…NKKQ. The short motif at 615–620 is the ITIM motif 1 element; the sequence is SLYASV. 2 short sequence motifs (ITIM motif) span residues 695–700 and 725–730; these read VTYAQL and SVYAAL. 2 positions are modified to phosphotyrosine; by LYN: tyrosine 697 and tyrosine 727.

Interacts with LYN, PTPN6/SHP-1 and PTPN11/SHP-2. Phosphorylated on tyrosine residues by LYN. Phosphorylation at Tyr-697 and Tyr-727 is important for interaction with PTPN6/SHP-1 and PTPN11/SHP-2.

The protein localises to the cell membrane. In terms of biological role, may act as receptor for class I MHC antigens. Becomes activated upon coligation with immune receptors, such as FCGR2B and the B-cell receptor. Down-regulates antigen-induced B-cell activation by recruiting phosphatases to its immunoreceptor tyrosine-based inhibitor motifs (ITIM). The polypeptide is Leukocyte immunoglobulin-like receptor subfamily B member 3A (Rattus norvegicus (Rat)).